Here is a 150-residue protein sequence, read N- to C-terminus: MRCVVYSIAKNSPLELVKSYQKQCKRFDCELELVDLFPKNTANAQKVSKELAQKSYSLAFEPYLSPKAKNIALHPEAQRGDSFAFSKMLENHLNINFFIAGAYGFEEKFLKDCQAWSLSEMTFSHEVAKIVLCEQIYRALSIIFKHPYHK.

Residues Ala100 and 118 to 123 (LSEMTF) each bind S-adenosyl-L-methionine.

Belongs to the RNA methyltransferase RlmH family. Homodimer.

It localises to the cytoplasm. It catalyses the reaction pseudouridine(1915) in 23S rRNA + S-adenosyl-L-methionine = N(3)-methylpseudouridine(1915) in 23S rRNA + S-adenosyl-L-homocysteine + H(+). Its function is as follows. Specifically methylates the pseudouridine at position 1915 (m3Psi1915) in 23S rRNA. This chain is Ribosomal RNA large subunit methyltransferase H, found in Helicobacter pylori (strain J99 / ATCC 700824) (Campylobacter pylori J99).